The following is a 1701-amino-acid chain: Rho guanine nucleotide exchange factor TIAM2 (1701 aa).

Disordered regions lie at residues 1-21 (MGNS…NTIT), 201-250 (SPTL…SSWY), 265-293 (GSFL…FNQS), and 389-417 (SLSR…DGLN). Residue Gly2 is the site of N-myristoyl glycine attachment. Residues 238 to 248 (SKGSSLSSESS) are compositionally biased toward low complexity. Basic and acidic residues predominate over residues 397 to 413 (LQEPRSKEGSDYFDSRS). Residues 506-620 (VVRKAGWLFF…WVTAVHSACA (115 aa)) form the PH 1 domain. A coiled-coil region spans residues 628–695 (GKEDTLRLLK…KFHMDLFRMR (68 aa)). Residues 810-881 (IQTYVHFQDN…YMQQQVYDEI (72 aa)) form the RBD domain. Positions 890–976 (DVQLTKTGSV…GLTLIARPPD (87 aa)) constitute a PDZ domain. The disordered stretch occupies residues 1070–1092 (DSQANGMEGPRENQDPPPRSLAR). The DH domain maps to 1099-1293 (RLRKVIQELV…EKVASHINEM (195 aa)). Positions 1347–1478 (DLELTVFVFK…EKTCKDRLVP (132 aa)) constitute a PH 2 domain. Disordered stretches follow at residues 1500-1556 (NSSS…GLAD) and 1568-1628 (LSDE…PKLV). The span at 1513–1527 (GTLLDSDEGSLSSGT) shows a compositional bias: low complexity. A Phosphoserine modification is found at Ser1583. A compositionally biased stretch (basic and acidic residues) spans 1596 to 1607 (RISEDPDVHPEA). Thr1648 is modified (phosphothreonine).

Belongs to the TIAM family. As to quaternary structure, interacts with MAP1A, MAP1B, PARP1 and YWHAE. Interacts with CD44, PARD3 and MAPK8IP2. Post-translationally, phosphorylated on serine and threonine residues. Phosphorylated on Thr-1648 by Rho-kinase. Its phosphorylation by Rho-kinase inhibits its guanine nucleotide exchange activity, its interaction with MAP1A, MAP1B, PARP1 and YWHAE and reduces its ability to promote neurite growth. As to expression, expressed in the occipital, frontal and temporal lobes, cerebellum, putamen and testis.

Its subcellular location is the cytoplasm. The protein resides in the cell projection. It localises to the lamellipodium. The protein localises to the filopodium. It is found in the growth cone. Its subcellular location is the neuron projection. The protein resides in the perikaryon. Functionally, modulates the activity of RHO-like proteins and connects extracellular signals to cytoskeletal activities. Acts as a GDP-dissociation stimulator protein that stimulates the GDP-GTP exchange activity of RHO-like GTPases and activates them. Mediates extracellular laminin signals to activate Rac1, contributing to neurite growth. Involved in lamellipodial formation and advancement of the growth cone of embryonic hippocampal neurons. Promotes migration of neurons in the cerebral cortex. When overexpressed, induces membrane ruffling accompanied by the accumulation of actin filaments along the altered plasma membrane. Activates specifically RAC1, but not CDC42 and RHOA. The sequence is that of Rho guanine nucleotide exchange factor TIAM2 (TIAM2) from Homo sapiens (Human).